The sequence spans 194 residues: Endoribonuclease YbeY (194 aa).

Residues His127, His131, and Asp137 each coordinate Zn(2+). The disordered stretch occupies residues 162-194 (PLSNDEDSAPEQDDSFDDDASDSSGGIMSGGVS). The span at 165–182 (NDEDSAPEQDDSFDDDAS) shows a compositional bias: acidic residues.

It belongs to the endoribonuclease YbeY family. Requires Zn(2+) as cofactor.

It localises to the cytoplasm. Its function is as follows. Single strand-specific metallo-endoribonuclease involved in late-stage 70S ribosome quality control and in maturation of the 3' terminus of the 16S rRNA. This Rhodopirellula baltica (strain DSM 10527 / NCIMB 13988 / SH1) protein is Endoribonuclease YbeY.